The chain runs to 329 residues: Ribosomal RNA small subunit methyltransferase C (329 aa).

It belongs to the methyltransferase superfamily. RsmC family. As to quaternary structure, monomer.

It is found in the cytoplasm. It catalyses the reaction guanosine(1207) in 16S rRNA + S-adenosyl-L-methionine = N(2)-methylguanosine(1207) in 16S rRNA + S-adenosyl-L-homocysteine + H(+). Specifically methylates the guanine in position 1207 of 16S rRNA in the 30S particle. The protein is Ribosomal RNA small subunit methyltransferase C of Actinobacillus pleuropneumoniae serotype 3 (strain JL03).